Consider the following 158-residue polypeptide: SsrA-binding protein (158 aa).

The interval 132 to 158 (KKTHDKRETEKKRDWNREKARLMRDKG) is disordered. Basic and acidic residues predominate over residues 136-158 (DKRETEKKRDWNREKARLMRDKG).

The protein belongs to the SmpB family.

The protein resides in the cytoplasm. Its function is as follows. Required for rescue of stalled ribosomes mediated by trans-translation. Binds to transfer-messenger RNA (tmRNA), required for stable association of tmRNA with ribosomes. tmRNA and SmpB together mimic tRNA shape, replacing the anticodon stem-loop with SmpB. tmRNA is encoded by the ssrA gene; the 2 termini fold to resemble tRNA(Ala) and it encodes a 'tag peptide', a short internal open reading frame. During trans-translation Ala-aminoacylated tmRNA acts like a tRNA, entering the A-site of stalled ribosomes, displacing the stalled mRNA. The ribosome then switches to translate the ORF on the tmRNA; the nascent peptide is terminated with the 'tag peptide' encoded by the tmRNA and targeted for degradation. The ribosome is freed to recommence translation, which seems to be the essential function of trans-translation. This is SsrA-binding protein from Brucella anthropi (strain ATCC 49188 / DSM 6882 / CCUG 24695 / JCM 21032 / LMG 3331 / NBRC 15819 / NCTC 12168 / Alc 37) (Ochrobactrum anthropi).